The primary structure comprises 529 residues: Bifunctional purine biosynthesis protein PurH (529 aa).

An MGS-like domain is found at 1 to 148 (MQQRRPVRRA…KNHKDVAIVV (148 aa)).

This sequence belongs to the PurH family.

The catalysed reaction is (6R)-10-formyltetrahydrofolate + 5-amino-1-(5-phospho-beta-D-ribosyl)imidazole-4-carboxamide = 5-formamido-1-(5-phospho-D-ribosyl)imidazole-4-carboxamide + (6S)-5,6,7,8-tetrahydrofolate. It carries out the reaction IMP + H2O = 5-formamido-1-(5-phospho-D-ribosyl)imidazole-4-carboxamide. It participates in purine metabolism; IMP biosynthesis via de novo pathway; 5-formamido-1-(5-phospho-D-ribosyl)imidazole-4-carboxamide from 5-amino-1-(5-phospho-D-ribosyl)imidazole-4-carboxamide (10-formyl THF route): step 1/1. It functions in the pathway purine metabolism; IMP biosynthesis via de novo pathway; IMP from 5-formamido-1-(5-phospho-D-ribosyl)imidazole-4-carboxamide: step 1/1. This is Bifunctional purine biosynthesis protein PurH from Salmonella paratyphi C (strain RKS4594).